The chain runs to 279 residues: tRNA pseudouridine synthase A (279 aa).

Asp54 functions as the Nucleophile in the catalytic mechanism. A substrate-binding site is contributed by Tyr112.

The protein belongs to the tRNA pseudouridine synthase TruA family. As to quaternary structure, homodimer.

It carries out the reaction uridine(38/39/40) in tRNA = pseudouridine(38/39/40) in tRNA. Formation of pseudouridine at positions 38, 39 and 40 in the anticodon stem and loop of transfer RNAs. This chain is tRNA pseudouridine synthase A, found in Cutibacterium acnes (strain DSM 16379 / KPA171202) (Propionibacterium acnes).